We begin with the raw amino-acid sequence, 414 residues long: 2-epi-5-epi-valiolone synthase (414 aa).

NAD(+) contacts are provided by residues D70, 101–104, 134–138, 158–159, K171, K180, and 198–201; these read ESAK, GVLTD, TT, and FLAT. K171 is a catalytic residue. Zn(2+)-binding residues include E213, H284, and H300.

This sequence belongs to the sugar phosphate cyclases superfamily. EEVS family. NAD(+) serves as cofactor. Requires Zn(2+) as cofactor.

It catalyses the reaction D-sedoheptulose 7-phosphate = 2-epi-5-epi-valiolone + phosphate. The protein operates within antibiotic biosynthesis. In terms of biological role, catalyzes the cyclization of D-sedoheptulose 7-phosphate to 2-epi-5-epi-valiolone. Involved in validamycin biosynthesis. This Streptomyces hygroscopicus subsp. jinggangensis (strain 5008) protein is 2-epi-5-epi-valiolone synthase.